The primary structure comprises 264 residues: Signal peptidase I (264 aa).

At 1-18 the chain is on the cytoplasmic side; the sequence is MNRDNTKTNKTVKQEFAS. The chain crosses the membrane as a helical span at residues 19–39; it reads FTFVICIALVIRILIMEPFTV. The Periplasmic segment spans residues 40–264; that stretch reads PTGSMKATIL…IFKNLYNVDE (225 aa). Active-site residues include S43 and K106.

This sequence belongs to the peptidase S26 family.

The protein localises to the cell inner membrane. The enzyme catalyses Cleavage of hydrophobic, N-terminal signal or leader sequences from secreted and periplasmic proteins.. Its function is as follows. Complements E.coli mutants temperature-sensitive for LepB function. The sequence is that of Signal peptidase I (lepB) from Rickettsia typhi (strain ATCC VR-144 / Wilmington).